We begin with the raw amino-acid sequence, 303 residues long: N-acetyl-D-glucosamine kinase (303 aa).

Residues 4–11 (GFDIGGTK) and 133–140 (GVGGGLVL) each bind ATP. Positions 157, 177, 179, and 184 each coordinate Zn(2+).

This sequence belongs to the ROK (NagC/XylR) family. NagK subfamily.

The catalysed reaction is N-acetyl-D-glucosamine + ATP = N-acetyl-D-glucosamine 6-phosphate + ADP + H(+). It participates in cell wall biogenesis; peptidoglycan recycling. Functionally, catalyzes the phosphorylation of N-acetyl-D-glucosamine (GlcNAc) derived from cell-wall degradation, yielding GlcNAc-6-P. This is N-acetyl-D-glucosamine kinase from Salmonella gallinarum (strain 287/91 / NCTC 13346).